A 269-amino-acid polypeptide reads, in one-letter code: Undecaprenyl-diphosphatase (269 aa).

The next 7 helical transmembrane spans lie at Phe41 to Tyr61, Gly78 to Leu98, Leu107 to Ile127, Ser148 to Ala167, Ala184 to Leu204, Leu213 to Val233, and Phe248 to Val268.

This sequence belongs to the UppP family.

It localises to the cell membrane. It carries out the reaction di-trans,octa-cis-undecaprenyl diphosphate + H2O = di-trans,octa-cis-undecaprenyl phosphate + phosphate + H(+). Catalyzes the dephosphorylation of undecaprenyl diphosphate (UPP). Confers resistance to bacitracin. The protein is Undecaprenyl-diphosphatase of Thermoanaerobacter pseudethanolicus (strain ATCC 33223 / 39E) (Clostridium thermohydrosulfuricum).